A 1070-amino-acid polypeptide reads, in one-letter code: DNA-directed RNA polymerase subunit beta (1070 aa).

Belongs to the RNA polymerase beta chain family. In terms of assembly, in plastids the minimal PEP RNA polymerase catalytic core is composed of four subunits: alpha, beta, beta', and beta''. When a (nuclear-encoded) sigma factor is associated with the core the holoenzyme is formed, which can initiate transcription.

Its subcellular location is the plastid. The protein resides in the chloroplast. The enzyme catalyses RNA(n) + a ribonucleoside 5'-triphosphate = RNA(n+1) + diphosphate. DNA-dependent RNA polymerase catalyzes the transcription of DNA into RNA using the four ribonucleoside triphosphates as substrates. The protein is DNA-directed RNA polymerase subunit beta of Vitis vinifera (Grape).